A 214-amino-acid polypeptide reads, in one-letter code: Putative AgrB-like protein 2 (214 aa).

5 helical membrane-spanning segments follow: residues 41–61 (IISV…LIFL), 83–103 (TLLG…SFFA), 109–129 (LVVF…FKFA), 154–174 (ILTI…NSGW), and 179–199 (PVML…TYIG).

The protein belongs to the AgrB family.

The protein resides in the cell membrane. May be involved in the proteolytic processing of a quorum sensing system signal molecule precursor. The polypeptide is Putative AgrB-like protein 2 (Clostridium perfringens (strain 13 / Type A)).